Reading from the N-terminus, the 433-residue chain is C2H2 type master regulator of conidiophore development brlA (433 aa).

Disordered regions lie at residues 23–54 (PSECPSMTSSFSPLDSPTPTPTSLYSQGSMAS) and 238–268 (TFKSHTPSTPHRSVSMGTPSGSDTPVSRMSG). Residues 30–48 (TSSFSPLDSPTPTPTSLYS) are compositionally biased toward low complexity. Residues 238-264 (TFKSHTPSTPHRSVSMGTPSGSDTPVS) are compositionally biased toward polar residues. 2 consecutive C2H2-type zinc fingers follow at residues 321–345 (FKCKEPGCKGRFKRQEHLKRHMKSH) and 351–376 (HVCWVPGCHRAFSRSDNLNAHYTKTH). A disordered region spans residues 391–423 (ETSQDFDPDFRGQLTPDGRPIYGSKLEDSMPDC).

It localises to the nucleus. Functionally, brlA, abaA and wetA are pivotal regulators of conidiophore development and conidium maturation. They act individually and together to regulate their own expression and that of numerous other sporulation-specific genes. Binds promoters of target genes at brlA response elements (BREs) containing the conserved sequence 5'-(C/A)(A/G)AGGG(G/A)-3'. The sequence is that of C2H2 type master regulator of conidiophore development brlA from Penicillium camemberti (strain FM 013).